Consider the following 734-residue polypeptide: MESIYKYGWIIPLLPLVSSITIGLGLFFFPKATKSLRRTYAIISTLLLSIAMFISFDLLWQQIAGSPTYRYLWSWIPDQDVTLEVGYPIDPLTSIMLVLVTTIGVTVMIHSDSYMSHDQGYVRFFAYLSLSTASMLGLVISPNLIQIYIFRELVGMCSYLLIGFWFTRPSAANACQKAFITNRVGDFGLLLGTSGFYWITGSFKFEDLFERFNESLANHEVSLFLATPCALLFPLGPVAKSAQFPLHVWLPDAMEGPTPISAPIHAATMVAAGIFLVARMFPLFQTLPLVMSSISWVGGVTASLGATVALAQKDLKRVLAYSTMSQLGYMMLALGIGSYRAASFHLITHAYPKALSSPGSGSVIHSMEPIVGYCPDKSQNIALMGGLRKYVPITGTTFLLGTLSLCGIPPLACFWSKDEIIADSWLYFPILGWIARFTAGLTGFYTFRMYSLTLEGDFRANPSKNLISSYVSPWENSRFGTSSQKQTDSALPLAQNRIESFDPSENIQEFSDKNVKNSVSTQSSREEYSPHPKESDNTMLFPLLILTIPTLLVGFIGVPSYQEEMGPDLLSHWLDPSLSLSNQINYENWLLEFIANATVSVGTASLGIFTASILYGPIPFFPRDLRQKTDLQLEGILGHFSSLLYNWSYSRGYIDGYYNIVFIKGTRILAKIISFFDQWIIDGIVNGVGISGSFGGEGSRYGEGGRISYYLFGFISGTIILLLVVINYKHDFFP.

Helical transmembrane passes span 9-29 (WIIP…LFFF), 40-60 (YAII…DLLW), 89-109 (IDPL…TVMI), 121-140 (YVRF…GLVI), 144-166 (LIQI…GFWF), 185-205 (GDFG…SFKF), 219-239 (HEVS…GPVA), 258-278 (TPIS…FLVA), 289-311 (LVMS…VALA), 318-338 (VLAY…GIGS), 395-415 (GTTF…ACFW), and 425-445 (WLYF…TGFY). A disordered region spans residues 512 to 534 (DKNVKNSVSTQSSREEYSPHPKE). Over residues 524–534 (SREEYSPHPKE) the composition is skewed to basic and acidic residues. The next 3 helical transmembrane spans lie at 539 to 559 (MLFP…IGVP), 601 to 621 (VGTA…IPFF), and 707 to 727 (ISYY…VVIN).

This sequence belongs to the complex I subunit 5 family. NDH is composed of at least 16 different subunits, 5 of which are encoded in the nucleus.

The protein resides in the plastid. Its subcellular location is the chloroplast thylakoid membrane. The catalysed reaction is a plastoquinone + NADH + (n+1) H(+)(in) = a plastoquinol + NAD(+) + n H(+)(out). The enzyme catalyses a plastoquinone + NADPH + (n+1) H(+)(in) = a plastoquinol + NADP(+) + n H(+)(out). Functionally, NDH shuttles electrons from NAD(P)H:plastoquinone, via FMN and iron-sulfur (Fe-S) centers, to quinones in the photosynthetic chain and possibly in a chloroplast respiratory chain. The immediate electron acceptor for the enzyme in this species is believed to be plastoquinone. Couples the redox reaction to proton translocation, and thus conserves the redox energy in a proton gradient. This Huperzia lucidula (Shining clubmoss) protein is NAD(P)H-quinone oxidoreductase subunit 5, chloroplastic (ndhF).